The primary structure comprises 177 residues: Alkyl hydroperoxide reductase AhpD (177 aa).

Residue Cys130 is the Proton donor of the active site. Cys130 and Cys133 are disulfide-bonded. The active-site Cysteine sulfenic acid (-SOH) intermediate is Cys133.

The protein belongs to the AhpD family. Homotrimer.

It carries out the reaction N(6)-[(R)-dihydrolipoyl]-L-lysyl-[lipoyl-carrier protein] + a hydroperoxide = N(6)-[(R)-lipoyl]-L-lysyl-[lipoyl-carrier protein] + an alcohol + H2O. Antioxidant protein with alkyl hydroperoxidase activity. Required for the reduction of the AhpC active site cysteine residues and for the regeneration of the AhpC enzyme activity. The protein is Alkyl hydroperoxide reductase AhpD of Mycolicibacterium smegmatis (strain ATCC 700084 / mc(2)155) (Mycobacterium smegmatis).